The chain runs to 196 residues: Holliday junction branch migration complex subunit RuvA (196 aa).

The interval Met1–His63 is domain I. The domain II stretch occupies residues Thr64–Thr142. The interval Ala143–Thr146 is flexible linker. Residues Ala147–Lys196 are domain III.

It belongs to the RuvA family. In terms of assembly, homotetramer. Forms an RuvA(8)-RuvB(12)-Holliday junction (HJ) complex. HJ DNA is sandwiched between 2 RuvA tetramers; dsDNA enters through RuvA and exits via RuvB. An RuvB hexamer assembles on each DNA strand where it exits the tetramer. Each RuvB hexamer is contacted by two RuvA subunits (via domain III) on 2 adjacent RuvB subunits; this complex drives branch migration. In the full resolvosome a probable DNA-RuvA(4)-RuvB(12)-RuvC(2) complex forms which resolves the HJ.

The protein localises to the cytoplasm. In terms of biological role, the RuvA-RuvB-RuvC complex processes Holliday junction (HJ) DNA during genetic recombination and DNA repair, while the RuvA-RuvB complex plays an important role in the rescue of blocked DNA replication forks via replication fork reversal (RFR). RuvA specifically binds to HJ cruciform DNA, conferring on it an open structure. The RuvB hexamer acts as an ATP-dependent pump, pulling dsDNA into and through the RuvAB complex. HJ branch migration allows RuvC to scan DNA until it finds its consensus sequence, where it cleaves and resolves the cruciform DNA. The sequence is that of Holliday junction branch migration complex subunit RuvA from Streptococcus thermophilus (strain ATCC BAA-491 / LMD-9).